A 188-amino-acid polypeptide reads, in one-letter code: Cell division protein SepF (188 aa).

A compositionally biased stretch (polar residues) spans 152-162 (TSHDEASTPTV). The segment at 152 to 188 (TSHDEASTPTVVSRDAEAEQQQEAAAAPSPAWGATAL) is disordered.

Belongs to the SepF family. In terms of assembly, homodimer. Interacts with FtsZ.

The protein localises to the cytoplasm. Cell division protein that is part of the divisome complex and is recruited early to the Z-ring. Probably stimulates Z-ring formation, perhaps through the cross-linking of FtsZ protofilaments. Its function overlaps with FtsA. This is Cell division protein SepF from Parasynechococcus marenigrum (strain WH8102).